Here is a 191-residue protein sequence, read N- to C-terminus: Large ribosomal subunit protein bL9 (191 aa).

The disordered stretch occupies residues 171-191; that stretch reads EDALKPEDFFNPEAELESEEE.

Belongs to the bacterial ribosomal protein bL9 family.

Binds to the 23S rRNA. This Rhizobium meliloti (strain 1021) (Ensifer meliloti) protein is Large ribosomal subunit protein bL9.